The following is a 446-amino-acid chain: Exodeoxyribonuclease 7 large subunit (446 aa).

It belongs to the XseA family. In terms of assembly, heterooligomer composed of large and small subunits.

The protein localises to the cytoplasm. The enzyme catalyses Exonucleolytic cleavage in either 5'- to 3'- or 3'- to 5'-direction to yield nucleoside 5'-phosphates.. Its function is as follows. Bidirectionally degrades single-stranded DNA into large acid-insoluble oligonucleotides, which are then degraded further into small acid-soluble oligonucleotides. In Streptococcus pyogenes serotype M6 (strain ATCC BAA-946 / MGAS10394), this protein is Exodeoxyribonuclease 7 large subunit.